The primary structure comprises 246 residues: Proteasome subunit alpha (246 aa).

It belongs to the peptidase T1A family. In terms of assembly, the 20S proteasome core is composed of 14 alpha and 14 beta subunits that assemble into four stacked heptameric rings, resulting in a barrel-shaped structure. The two inner rings, each composed of seven catalytic beta subunits, are sandwiched by two outer rings, each composed of seven alpha subunits. The catalytic chamber with the active sites is on the inside of the barrel. Has a gated structure, the ends of the cylinder being occluded by the N-termini of the alpha-subunits. Is capped by the proteasome-associated ATPase, ARC. Can also interact with the bacterial proteasome activator Bpa through the C-terminal hydrophobic-tyrosine-X motif (HbYX motif) of Bpa; Bpa forms a homooligomeric ring-like structure which stacks co-axially with the proteasomal alpha-rings. In terms of processing, pupylated at an undetermined lysine residue by the prokaryotic ubiquitin-like protein Pup with the help of the ligase PafA, which leads to its degradation by the proteasome and thereby constitutes a negative auto-regulation.

It is found in the cytoplasm. Its pathway is protein degradation; proteasomal Pup-dependent pathway. Its activity is regulated as follows. The formation of the proteasomal ATPase ARC-20S proteasome complex, likely via the docking of the C-termini of ARC into the intersubunit pockets in the alpha-rings, may trigger opening of the gate for substrate entry. Interconversion between the open-gate and close-gate conformations leads to a dynamic regulation of the 20S proteasome proteolysis activity. PPS auto-regulates its own activity via pupylation and degradation of its components. Peptidolytic activity is inhibited by N-acetyl-Leu-Leu-norleucinal (Ac-LLnL) in vitro. In terms of biological role, component of the proteasome core, a large protease complex with broad specificity involved in protein degradation. The M.smegmatis proteasome is able to cleave oligopeptides after hydrophobic residues, thus displaying chymotrypsin-like activity. In complex with the ATPase Mpa, degrades protein targets conjugated to a prokaryotic ubiquitin-like protein (Pup). Identified substrates of the M.smegmatis proteasome are the pupylated SodA and Ino1 proteins. The Pup-proteasome system (PPS) is essential for survival under starvation; PPS likely functions to recycle amino acids under nitrogen starvation, thereby enabling the cell to maintain basal metabolic activities. The chain is Proteasome subunit alpha from Mycolicibacterium smegmatis (strain ATCC 700084 / mc(2)155) (Mycobacterium smegmatis).